A 283-amino-acid chain; its full sequence is 4-diphosphocytidyl-2-C-methyl-D-erythritol kinase (283 aa).

Lysine 10 is an active-site residue. An ATP-binding site is contributed by 99–109 (PMGGGLGGGSS). Aspartate 141 is a catalytic residue.

Belongs to the GHMP kinase family. IspE subfamily. Homodimer.

The catalysed reaction is 4-CDP-2-C-methyl-D-erythritol + ATP = 4-CDP-2-C-methyl-D-erythritol 2-phosphate + ADP + H(+). It functions in the pathway isoprenoid biosynthesis; isopentenyl diphosphate biosynthesis via DXP pathway; isopentenyl diphosphate from 1-deoxy-D-xylulose 5-phosphate: step 3/6. Its function is as follows. Catalyzes the phosphorylation of the position 2 hydroxy group of 4-diphosphocytidyl-2C-methyl-D-erythritol. This is 4-diphosphocytidyl-2-C-methyl-D-erythritol kinase from Salmonella gallinarum (strain 287/91 / NCTC 13346).